A 266-amino-acid polypeptide reads, in one-letter code: Zinc finger protein SNAI2 (266 aa).

Residues 1–20 (MPRSFLVKKHFNSAKKPNYG) form an SNAG domain region. The segment at 75–115 (SGYPSSLGRVSPPPQSDTSSKDHSGSESPISDEEERLQTKL) is disordered. 4 C2H2-type zinc fingers span residues 126-148 (FQCSLCSKTYSTFSGLAKHKQLH), 157-179 (FSCKYCEKEYVSLGALKMHIRTH), 183-205 (CVCKICGKAFSRPWLLQGHIRTH), and 211-233 (FSCPHCNRAFADRSNLRAHLQTH). The C2H2-type 5; atypical zinc-finger motif lies at 239–262 (YQCKNCSKTFSRMSLLHKHEESGC).

It belongs to the snail C2H2-type zinc-finger protein family. Interacts (via SNAG domain) with limd1 (via LIM domains), wtip (via LIM domains) and ajuba (via LIM domains). Interacts with elp3. First expressed on the lateral side of stage 12 embryos. At stage 14, strongly expressed in the lateral neural folds. At stage 16, expressed in pre-migratory neural crest cells. At stage 18, expression is dispersed over the neural plate in a pattern surrounding the rhombomeres. At stage 22, expressed in neural crest derivatives, including the branchial arches and the tissues surrounding the eyes and forebrain. After stage 17, expression is weak in the lateral plate mesoderm, increasing at stage 26, but was down-regulated in the pronephros region at stage 26.

The protein localises to the nucleus. Probable transcriptional repressor. Acts downstream of snai1 in the specification of the neural crest and neural crest migration. This is Zinc finger protein SNAI2 (snai2) from Xenopus laevis (African clawed frog).